The following is a 962-amino-acid chain: MENVEEAPPLSSESNSNSNNSSASSSSHQLSQSGAMGAEIAPSTSRSHSHSPTPSPPVPASSHDQPHPDHPSPPLNASETEARENSPHDHSPTPTFHQTAPPPTTSSTAPQRDEREQQQQQEAPPLQQDQQENSPAQDQELHPLLDQQNQEYPAVHQDQQAEQNQELHHIEGLIRHRESQNPEEHPPQASLENRETLGREDTNQEPDEPQVRDPEIEPEAEPPPPLLLEDLDEQDSGSQDLNEQQPPLIIDANAIAETIDANAVERIDDYEDDDEEVDEEEEVVEDRVDRAGEVASVSGAQRLHSVAVLPRYSSASRAPRSSNNNNNNISNHNNNNNNSNSNSLSRRTRHFYSNNGSHFSNDMFPSHNPRSSTQTSSPRVGGRRHHSTPAASSNSPQHQGVDPLRLLYPNVNESETPLPRCWSPHDKCLSIGLSQNNLRVTYKGVGKQHSDAASVRTAYPIPSSCGLYYFEVRIISKGRNGYMGIGLTAQQFRMNRLPGWDKQSYGYHGDDGNSFSSSGNGQTYGPTFTTGDVIGCCVNFVNNTCFYTKNGVDLGIAFRDLPTKLYPTVGLQTPGEEVDANFGQEPFKFDKIVDMMKEMRSNVLRKIDRYPHLLETPENLMNRLVSTYLVHNAFSKTAEAFNGYTNQTFNEDLASIKTRQKIIKLILTGKMSQAIEHTLRSFPGLLENNKNLWFALKCRQFIEMINGADIENVNNKVTATTQTMPTNQTSVIQSTKTFKHSKSGSGNGNVNINQTQQQNNTAIPAVIKPQGGDRPDIKNMLVDDNSNKCVEHDSNSMDVEMEPCQSHSNGGDSSSNGNASAVRNSLDAIDEEMDVDVSPSSRNCGRVIEKILEFGKELSSMGQQLEKENLMTEEERQMLEDAFSLIAYSNPWSSPLGWLLCPSRRESVSTTLNSAILESLNFERRPPLEYLVAHASELIKVIGQHSLGEDAFITIDDVFPQN.

2 stretches are compositionally biased toward low complexity: residues 1–33 and 41–52; these read MENV…LSQS and APSTSRSHSHSP. Disordered regions lie at residues 1–246, 271–296, and 313–402; these read MENV…EQQP, EDDD…EVAS, and SSAS…QGVD. The span at 80–91 shows a compositional bias: basic and acidic residues; that stretch reads TEARENSPHDHS. Positions 118 to 132 are enriched in low complexity; it reads QQQQEAPPLQQDQQE. Residues 146–164 are compositionally biased toward polar residues; it reads DQQNQEYPAVHQDQQAEQN. Residues 165-202 are compositionally biased toward basic and acidic residues; that stretch reads QELHHIEGLIRHRESQNPEEHPPQASLENRETLGREDT. The segment covering 236–245 has biased composition (polar residues); the sequence is SGSQDLNEQQ. Over residues 271 to 284 the composition is skewed to acidic residues; it reads EDDDEEVDEEEEVV. The segment covering 321–343 has biased composition (low complexity); the sequence is SSNNNNNNISNHNNNNNNSNSNS. Composition is skewed to polar residues over residues 351–360 and 368–378; these read FYSNNGSHFS and NPRSSTQTSSP. Residues Ser387, Ser393, and Ser395 each carry the phosphoserine modification. Polar residues predominate over residues 389–398; that stretch reads PAASSNSPQH. Residues 400–587 form the B30.2/SPRY domain; the sequence is GVDPLRLLYP…VDANFGQEPF (188 aa). Residues 617 to 649 form the LisH domain; it reads PENLMNRLVSTYLVHNAFSKTAEAFNGYTNQTF. The region spanning 655 to 712 is the CTLH domain; the sequence is SIKTRQKIIKLILTGKMSQAIEHTLRSFPGLLENNKNLWFALKCRQFIEMINGADIEN. The tract at residues 800-820 is disordered; sequence EMEPCQSHSNGGDSSSNGNAS. The span at 806–820 shows a compositional bias: low complexity; that stretch reads SHSNGGDSSSNGNAS.

It belongs to the RANBP9/10 family. Expressed in the GSCs and in dividing cysts. Expression is reduced in the germline as individual egg chambers are formed. Isoform C is expressed in all somatic and germline cells of the ovary. Isoform D is expressed in the GSC niche.

It localises to the cytoplasm. Its subcellular location is the membrane. It is found in the nucleus. Its function is as follows. May be involved in JAK/STAT signaling. Isoform D is required for the proper arrangement of niche cells and is autonomously required for proper niche cell size, isoform C negatively regulates the adhesive properties of the niche. The germline stem cell (GSC) niche in ovaries is made up of two somatic cell types: 8-9 cells in a single-filed array make up the terminal filament (TF), and a tight cluster of 5 or 6 cap cells (CpC). Regulating the size and adhesive properties of the CpCs is an important component of the mechanism that controls their capacity to support stem cells, isoform C and isoform D are important factors in mediating this regulation. In contrast, isoform C acts as a positive regulator of cell adhesion in follicle cell epithelium. This chain is Ran-binding proteins 9/10 homolog (RanBPM), found in Drosophila melanogaster (Fruit fly).